Consider the following 461-residue polypeptide: Argininosuccinate lyase (461 aa).

This sequence belongs to the lyase 1 family. Argininosuccinate lyase subfamily.

It localises to the cytoplasm. It catalyses the reaction 2-(N(omega)-L-arginino)succinate = fumarate + L-arginine. Its pathway is amino-acid biosynthesis; L-arginine biosynthesis; L-arginine from L-ornithine and carbamoyl phosphate: step 3/3. The sequence is that of Argininosuccinate lyase from Dehalococcoides mccartyi (strain ATCC BAA-2100 / JCM 16839 / KCTC 5957 / BAV1).